The primary structure comprises 674 residues: Putative kinase-like protein TMKL1 (674 aa).

The N-terminal stretch at 1–25 (MGMEALRFLHVIFFFVLILHCHCGT) is a signal peptide. Topologically, residues 26 to 295 (SLSGSSDVKL…PLKPCLGSSR (270 aa)) are extracellular. 4 N-linked (GlcNAc...) asparagine glycosylation sites follow: N57, N90, N95, and N110. LRR repeat units follow at residues 100–122 (HLLS…IGEF), 124–146 (MLQS…LGYT), 148–169 (SLSD…SIWN), and 173–194 (KLVS…PALP). Residues N183 and N195 are each glycosylated (N-linked (GlcNAc...) asparagine). LRR repeat units lie at residues 200 to 222 (NLQV…ITRF), 224 to 244 (GVKS…EGLG), and 247 to 269 (ELES…GESK). N-linked (GlcNAc...) asparagine glycans are attached at residues N252 and N257. The chain crosses the membrane as a helical span at residues 296 to 323 (LSPGAVAGLVIGLMSGAVVVASLLIGYL). Residues 324–674 (QNKKRKSSIE…ETRSDAETPF (351 aa)) lie on the Cytoplasmic side of the membrane. Residues 331–350 (SIESEDDLEEGDEEDEIGEK) are disordered. Over residues 333-348 (ESEDDLEEGDEEDEIG) the composition is skewed to acidic residues. S334 carries the phosphoserine modification. The Protein kinase domain maps to 373–674 (NATGQVMEKT…ETRSDAETPF (302 aa)). Position 375 is a phosphothreonine (T375). Position 454 is a phosphoserine (S454). The tract at residues 649–674 (LEENRPRNRSALYSPTETRSDAETPF) is disordered.

The protein belongs to the protein kinase superfamily.

Its subcellular location is the membrane. Functionally, does not seem to have conserved a kinase activity. The sequence is that of Putative kinase-like protein TMKL1 (TMKL1) from Arabidopsis thaliana (Mouse-ear cress).